The primary structure comprises 139 residues: D-ribose pyranase (139 aa).

The active-site Proton donor is His20. Substrate contacts are provided by residues Asp28, His106, and 128 to 130 (YAN).

Belongs to the RbsD / FucU family. RbsD subfamily. As to quaternary structure, homodecamer.

The protein resides in the cytoplasm. The catalysed reaction is beta-D-ribopyranose = beta-D-ribofuranose. It functions in the pathway carbohydrate metabolism; D-ribose degradation; D-ribose 5-phosphate from beta-D-ribopyranose: step 1/2. Its function is as follows. Catalyzes the interconversion of beta-pyran and beta-furan forms of D-ribose. The sequence is that of D-ribose pyranase from Pectobacterium carotovorum subsp. carotovorum (strain PC1).